The following is a 237-amino-acid chain: Concanavalin-A (237 aa).

Positions 8 and 10 each coordinate Mn(2+). Asp10, Tyr12, Asn14, and Asp19 together coordinate Ca(2+). Asn14 contacts a carbohydrate. Residues Asp19 and His24 each contribute to the Mn(2+) site. Residues Gly98–Tyr100, Asp208, and Arg228 each bind a carbohydrate.

The protein belongs to the leguminous lectin family. As to quaternary structure, homotetramer. Concanavalin A-like lectins of the Diocleinae subtribe undergo proteolytic processing referred to as circular permutation. The propeptide is split into an N-terminal and a C-terminal part, the gamma and beta chain, respectively. These are then religated in beta-gamma order to form the mature alpha chain. The beta and gamma chains can often be detected in cell extracts. Residues 1-118 of the mature chain, as displayed here, probably constitute the beta chain in the propeptide, residues 119-237 the gamma chain.

Glucose/D-mannose specific lectin. In Canavalia cathartica (Jackbean), this protein is Concanavalin-A.